Here is a 444-residue protein sequence, read N- to C-terminus: Tubulin beta chain (444 aa).

Residues glutamine 11, glutamate 69, serine 138, glycine 142, threonine 143, glycine 144, asparagine 204, and asparagine 226 each coordinate GTP. A Mg(2+)-binding site is contributed by glutamate 69.

This sequence belongs to the tubulin family. Dimer of alpha and beta chains. A typical microtubule is a hollow water-filled tube with an outer diameter of 25 nm and an inner diameter of 15 nM. Alpha-beta heterodimers associate head-to-tail to form protofilaments running lengthwise along the microtubule wall with the beta-tubulin subunit facing the microtubule plus end conferring a structural polarity. Microtubules usually have 13 protofilaments but different protofilament numbers can be found in some organisms and specialized cells. It depends on Mg(2+) as a cofactor.

It localises to the cytoplasm. The protein resides in the cytoskeleton. Tubulin is the major constituent of microtubules, a cylinder consisting of laterally associated linear protofilaments composed of alpha- and beta-tubulin heterodimers. Microtubules grow by the addition of GTP-tubulin dimers to the microtubule end, where a stabilizing cap forms. Below the cap, tubulin dimers are in GDP-bound state, owing to GTPase activity of alpha-tubulin. The chain is Tubulin beta chain from Euplotoides octocarinatus (Freshwater ciliate).